We begin with the raw amino-acid sequence, 615 residues long: uncharacterized protein (615 aa).

Composition is skewed to polar residues over residues 1 to 11, 41 to 55, and 128 to 140; these read MSETSSNSPAS, LSQNAQGASKSSSKV, and TSGSSTGLSNAPP. 2 disordered regions span residues 1–61 and 97–149; these read MSET…QALV and HQNH…KASS. Phosphoserine occurs at positions 149 and 152. The segment at 181–217 is disordered; the sequence is LIHPEQTDRGLPYAPDEKFHNSGSLKLPKGASLEDLS. 2 positions are modified to phosphoserine: Ser219 and Ser275. Disordered regions lie at residues 266–481, 493–565, and 586–615; these read KPLA…KFTG, RLQK…KPSF, and GVETRKEVEPKEEAVIPEEDVEVEVETEEQ. A compositionally biased stretch (polar residues) spans 272–283; that stretch reads RQRSTADLTESD. Phosphothreonine is present on residues Thr276 and Thr297. Basic and acidic residues predominate over residues 312-323; the sequence is EAEKGFYTKDGE. The segment covering 356-376 has biased composition (low complexity); that stretch reads PSLSSASQPSAASSSSSSEPS. Polar residues predominate over residues 505–522; sequence PNKSKSPSGTKSPASGET. Residue Thr514 is modified to Phosphothreonine. The residue at position 516 (Ser516) is a Phosphoserine. Over residues 586–599 the composition is skewed to basic and acidic residues; that stretch reads GVETRKEVEPKEEA. The segment covering 600–615 has biased composition (acidic residues); it reads VIPEEDVEVEVETEEQ.

This is an uncharacterized protein from Schizosaccharomyces pombe (strain 972 / ATCC 24843) (Fission yeast).